We begin with the raw amino-acid sequence, 346 residues long: Anthranilate phosphoribosyltransferase (346 aa).

Residues G80, 83–84 (GD), T88, 90–93 (NIST), 108–116 (KHGNTAVSS), and S120 each bind 5-phospho-alpha-D-ribose 1-diphosphate. Anthranilate is bound at residue G80. Residue S92 participates in Mg(2+) binding. N111 contacts anthranilate. R166 is a binding site for anthranilate. D225 and E226 together coordinate Mg(2+).

It belongs to the anthranilate phosphoribosyltransferase family. Homodimer. It depends on Mg(2+) as a cofactor.

The catalysed reaction is N-(5-phospho-beta-D-ribosyl)anthranilate + diphosphate = 5-phospho-alpha-D-ribose 1-diphosphate + anthranilate. It functions in the pathway amino-acid biosynthesis; L-tryptophan biosynthesis; L-tryptophan from chorismate: step 2/5. Functionally, catalyzes the transfer of the phosphoribosyl group of 5-phosphorylribose-1-pyrophosphate (PRPP) to anthranilate to yield N-(5'-phosphoribosyl)-anthranilate (PRA). In Desulforudis audaxviator (strain MP104C), this protein is Anthranilate phosphoribosyltransferase.